The sequence spans 40 residues: Large ribosomal subunit protein bL36 (40 aa).

This sequence belongs to the bacterial ribosomal protein bL36 family.

This is Large ribosomal subunit protein bL36 from Corynebacterium urealyticum (strain ATCC 43042 / DSM 7109).